Reading from the N-terminus, the 399-residue chain is Acetate kinase (399 aa).

Residue Asn-9 participates in Mg(2+) binding. Lys-16 is an ATP binding site. Arg-90 contacts substrate. The Proton donor/acceptor role is filled by Asp-147. ATP is bound by residues 207–211, 281–283, and 333–337; these read HLGNG, DFR, and GVGEN. Glu-387 provides a ligand contact to Mg(2+).

This sequence belongs to the acetokinase family. Homodimer. The cofactor is Mg(2+). Mn(2+) is required as a cofactor.

It is found in the cytoplasm. It carries out the reaction acetate + ATP = acetyl phosphate + ADP. Its pathway is metabolic intermediate biosynthesis; acetyl-CoA biosynthesis; acetyl-CoA from acetate: step 1/2. In terms of biological role, catalyzes the formation of acetyl phosphate from acetate and ATP. Can also catalyze the reverse reaction. In Mycobacterium sp. (strain KMS), this protein is Acetate kinase.